A 374-amino-acid chain; its full sequence is Anhydro-N-acetylmuramic acid kinase (374 aa).

12 to 19 (GTSLDGID) is a binding site for ATP.

This sequence belongs to the anhydro-N-acetylmuramic acid kinase family.

It catalyses the reaction 1,6-anhydro-N-acetyl-beta-muramate + ATP + H2O = N-acetyl-D-muramate 6-phosphate + ADP + H(+). It functions in the pathway amino-sugar metabolism; 1,6-anhydro-N-acetylmuramate degradation. It participates in cell wall biogenesis; peptidoglycan recycling. Its function is as follows. Catalyzes the specific phosphorylation of 1,6-anhydro-N-acetylmuramic acid (anhMurNAc) with the simultaneous cleavage of the 1,6-anhydro ring, generating MurNAc-6-P. Is required for the utilization of anhMurNAc either imported from the medium or derived from its own cell wall murein, and thus plays a role in cell wall recycling. The chain is Anhydro-N-acetylmuramic acid kinase from Klebsiella pneumoniae subsp. pneumoniae (strain ATCC 700721 / MGH 78578).